Consider the following 273-residue polypeptide: Large ribosomal subunit protein uL2 (273 aa).

2 disordered regions span residues 28 to 53 and 221 to 273; these read KPFAPLLEKNSKSGGRNNNGRITTRH and RGTA…RRSK. Over residues 39-48 the composition is skewed to low complexity; that stretch reads KSGGRNNNGR.

It belongs to the universal ribosomal protein uL2 family. Part of the 50S ribosomal subunit. Forms a bridge to the 30S subunit in the 70S ribosome.

Functionally, one of the primary rRNA binding proteins. Required for association of the 30S and 50S subunits to form the 70S ribosome, for tRNA binding and peptide bond formation. It has been suggested to have peptidyltransferase activity; this is somewhat controversial. Makes several contacts with the 16S rRNA in the 70S ribosome. This is Large ribosomal subunit protein uL2 from Klebsiella pneumoniae (strain 342).